The primary structure comprises 857 residues: Protein argonaute-1 (857 aa).

One can recognise a PAZ domain in the interval 227–346; that stretch reads PVIEFMCEVL…LPLEVCNIVA (120 aa). Interaction with guide RNA regions lie at residues 309 to 314 and 522 to 564; these read YFKQKY and GKTP…LCLK. Positions 515–816 constitute a Piwi domain; it reads LIIVILPGKT…VAFRARYHLV (302 aa). The tract at residues 670–675 is impairs access of bound RNA to the active site; sequence PEGQLP. 3 interaction with guide RNA regions span residues 708–712, 751–759, and 788–813; these read RHHTR, HAGIQGTSR, and YVRC…RARY.

It belongs to the argonaute family. Ago subfamily. In terms of assembly, interacts with DDB1, DDX5, DDX6, DHX30, DHX36, DDX47, DICER1, AGO2, ELAVL1, HNRNPF, IGF2BP1, ILF3, IMP8, MATR3, MOV10, PABPC1, PRMT5, RBM4, SART3, TNRC6B, UPF1 and YBX1. Associates with polysomes and messenger ribonucleoproteins (mNRPs). Interacts with LIMD1, WTIP and AJUBA. Interacts with APOBEC3F, APOBEC3G and APOBEC3H. Ubiquitinated on surface-exposed lysines by a SCF-like E3 ubiquitin-protein ligase complex containing ZSWIM8 during target-directed microRNA degradation (TDMD), a process that mediates degradation of microRNAs (miRNAs). Ubiquitination by the SCF-like E3 ubiquitin-protein ligase complex containing ZSWIM8 leads to its subsequent degradation, thereby exposing miRNAs for degradation. ZSWIM8 recognizes and binds AGO1 when it is engaged with a TDMD target.

It localises to the cytoplasm. Its subcellular location is the P-body. In terms of biological role, required for RNA-mediated gene silencing (RNAi). Binds to short RNAs such as microRNAs (miRNAs) or short interfering RNAs (siRNAs), and represses the translation of mRNAs which are complementary to them. Lacks endonuclease activity and does not appear to cleave target mRNAs. Also required for transcriptional gene silencing (TGS) of promoter regions which are complementary to bound short antigene RNAs (agRNAs). The chain is Protein argonaute-1 (AGO1) from Homo sapiens (Human).